Reading from the N-terminus, the 424-residue chain is GTPase Obg (424 aa).

One can recognise an Obg domain in the interval 1 to 158 (MFYDQAKIYV…RNLLLELKLL (158 aa)). An OBG-type G domain is found at 159–329 (ADVGLVGFPN…LVYAAAKALP (171 aa)). Residues 165 to 172 (GFPNVGKS), 190 to 194 (FTTLV), 212 to 215 (DIPG), 282 to 285 (NKMD), and 310 to 312 (SAA) each bind GTP. Mg(2+) is bound by residues S172 and T192. The OCT domain occupies 347–424 (TQASAPHRFE…IAGIEFEWEE (78 aa)).

This sequence belongs to the TRAFAC class OBG-HflX-like GTPase superfamily. OBG GTPase family. Monomer. It depends on Mg(2+) as a cofactor.

The protein localises to the cytoplasm. In terms of biological role, an essential GTPase which binds GTP, GDP and possibly (p)ppGpp with moderate affinity, with high nucleotide exchange rates and a fairly low GTP hydrolysis rate. Plays a role in control of the cell cycle, stress response, ribosome biogenesis and in those bacteria that undergo differentiation, in morphogenesis control. The chain is GTPase Obg from Desulfitobacterium hafniense (strain DSM 10664 / DCB-2).